An 843-amino-acid chain; its full sequence is Protein P (843 aa).

The terminal protein domain (TP) stretch occupies residues 1–177 (MPLSYQHFRK…FCGSPYSWEQ (177 aa)). Residues 178-346 (DLQHGRLVFQ…YCLCHIVNLI (169 aa)) are spacer. Disordered regions lie at residues 220–258 (KSRL…VGVE) and 292–319 (SKGH…SQGS). Residues 308-319 (PPNSSRSQSQGS) are compositionally biased toward low complexity. The polymerase/reverse transcriptase domain (RT) stretch occupies residues 347–690 (DDWGPCAEHG…YLNLYPVARQ (344 aa)). One can recognise a Reverse transcriptase domain in the interval 357–600 (EHRIRTPRTP…YSLNFMGYVI (244 aa)). Asp-429, Asp-551, and Asp-552 together coordinate Mg(2+).

Belongs to the hepadnaviridae P protein family.

The catalysed reaction is DNA(n) + a 2'-deoxyribonucleoside 5'-triphosphate = DNA(n+1) + diphosphate. It carries out the reaction Endonucleolytic cleavage to 5'-phosphomonoester.. Its activity is regulated as follows. Activated by host HSP70 and HSP40 in vitro to be able to bind the epsilon loop of the pgRNA. Because deletion of the RNase H region renders the protein partly chaperone-independent, the chaperones may be needed indirectly to relieve occlusion of the RNA-binding site by this domain. Inhibited by several reverse-transcriptase inhibitors: Lamivudine, Adefovir and Entecavir. In terms of biological role, multifunctional enzyme that converts the viral RNA genome into dsDNA in viral cytoplasmic capsids. This enzyme displays a DNA polymerase activity that can copy either DNA or RNA templates, and a ribonuclease H (RNase H) activity that cleaves the RNA strand of RNA-DNA heteroduplexes in a partially processive 3'- to 5'-endonucleasic mode. Neo-synthesized pregenomic RNA (pgRNA) are encapsidated together with the P protein, and reverse-transcribed inside the nucleocapsid. Initiation of reverse-transcription occurs first by binding the epsilon loop on the pgRNA genome, and is initiated by protein priming, thereby the 5'-end of (-)DNA is covalently linked to P protein. Partial (+)DNA is synthesized from the (-)DNA template and generates the relaxed circular DNA (RC-DNA) genome. After budding and infection, the RC-DNA migrates in the nucleus, and is converted into a plasmid-like covalently closed circular DNA (cccDNA). The activity of P protein does not seem to be necessary for cccDNA generation, and is presumably released from (+)DNA by host nuclear DNA repair machinery. The sequence is that of Protein P from Hepatitis B virus genotype B1 (isolate Japan/Yamagata-2/1998) (HBV-B).